Consider the following 237-residue polypeptide: Large ribosomal subunit protein uL1 (237 aa).

The protein belongs to the universal ribosomal protein uL1 family. In terms of assembly, part of the 50S ribosomal subunit.

Functionally, binds directly to 23S rRNA. The L1 stalk is quite mobile in the ribosome, and is involved in E site tRNA release. Protein L1 is also a translational repressor protein, it controls the translation of the L11 operon by binding to its mRNA. This chain is Large ribosomal subunit protein uL1, found in Dehalococcoides mccartyi (strain CBDB1).